The sequence spans 523 residues: Polypyrimidine tract-binding protein 3 (523 aa).

The segment at 1-25 is disordered; the sequence is MNSSTSAGVYANGNDNKKFKGDRPP. RRM domains are found at residues 30–114, 153–229, and 329–403; these read RVLH…NLPN, LRII…FSKL, and SVLL…LSKH. A Glycyl lysine isopeptide (Lys-Gly) (interchain with G-Cter in SUMO2) cross-link involves residue K36. Y98 carries the post-translational modification Phosphotyrosine. The residue at position 109 (T109) is a Phosphothreonine. K187 participates in a covalent cross-link: Glycyl lysine isopeptide (Lys-Gly) (interchain with G-Cter in SUMO2). Position 394 is an N6-acetyllysine (K394). The interval 406–426 is disordered; it reads VQLPREGQEDQGLTKDFSNSP. S425 is modified (phosphoserine). One can recognise an RRM 4 domain in the interval 446-521; it reads ATLHLSNIPP…HHLRVSFSKS (76 aa).

In terms of assembly, interacts with THBS4 (via the acidic amphipathic C-terminus).

RNA-binding protein that mediates pre-mRNA alternative splicing regulation. Plays a role in the regulation of cell proliferation, differentiation and migration. Positive regulator of EPO-dependent erythropoiesis. Participates in cell differentiation regulation by repressing tissue-specific exons. Promotes Fas exon 6 skipping. Binds RNA, preferentially to both poly(G) and poly(U). This is Polypyrimidine tract-binding protein 3 (Ptbp3) from Mus musculus (Mouse).